The following is a 593-amino-acid chain: Cryptochrome-2 (593 aa).

One can recognise a Photolyase/cryptochrome alpha/beta domain in the interval 22-151; it reads ASSVHWFRKG…EVVTENSHTL (130 aa). A Glycyl lysine isopeptide (Lys-Gly) (interchain with G-Cter in ubiquitin) cross-link involves residue Lys30. Position 90 is a phosphoserine (Ser90). Residues Lys126 and Lys242 each participate in a glycyl lysine isopeptide (Lys-Gly) (interchain with G-Cter in ubiquitin) cross-link. At Ser266 the chain carries Phosphoserine; by MAPK. Residue Ser271 participates in FAD binding. Ser299 is modified (phosphoserine). Residue Gln308 participates in FAD binding. A Glycyl lysine isopeptide (Lys-Gly) (interchain with G-Cter in ubiquitin) cross-link involves residue Lys348. Residues His374 and 406 to 408 each bind FAD; that span reads DAD. A required for inhibition of CLOCK-BMAL1-mediated transcription region spans residues 390–489; sequence WVSWESGVRV…IIGVDYPRPI (100 aa). Glycyl lysine isopeptide (Lys-Gly) (interchain with G-Cter in ubiquitin) cross-links involve residues Lys475 and Lys504. A disordered region spans residues 532 to 593; it reads PVAEPSSSQA…PTPELPSKDA (62 aa). A compositionally biased stretch (low complexity) spans 537-548; it reads SSSQAGSMSSAG. Ser554 bears the Phosphoserine; by GSK3-beta mark. Ser558 is subject to Phosphoserine; by DYRK1A and MAPK.

It belongs to the DNA photolyase class-1 family. Component of the circadian core oscillator, which includes the CRY proteins, CLOCK or NPAS2, BMAL1 or BMAL2, CSNK1D and/or CSNK1E, TIMELESS, and the PER proteins. Interacts with TIMELESS. Interacts directly with PER1, PER2 and PER3; interaction with PER2 inhibits its ubiquitination and vice versa. Interacts with CLOCK-BMAL1. Interacts with CLOCK. Interacts with BMAL1. Interacts with NFIL3. Interacts with FBXL3. Interacts with FBXL21. FBXL3, PER2 and the cofactor FAD compete for overlapping binding sites. FBXL3 cannot bind CRY2 that interacts already with PER2 or that contains bound FAD. Interacts with PPP5C (via TPR repeats); the interaction down-regulates the PPP5C phosphatase activity on CSNK1E. Interacts with nuclear receptors AR and NR3C1/GR; the interaction is ligand dependent. Interacts with PRKDC and CIART. Interacts with ISCA1 (in vitro). Interacts with DDB1, USP7 and TARDBP. Interacts with HNF4A. Interacts with PPARA. Interacts with PPARD (via domain NR LBD) and NR1I2 (via domain NR LBD) in a ligand-dependent manner. Interacts with PPARG, NR1I3 and VDR in a ligand-dependent manner. It depends on FAD as a cofactor. (6R)-5,10-methylene-5,6,7,8-tetrahydrofolate is required as a cofactor. In terms of processing, phosphorylation on Ser-266 by MAPK is important for the inhibition of CLOCK-BMAL1-mediated transcriptional activity. Phosphorylation by CSKNE requires interaction with PER1 or PER2. Phosphorylated in a circadian manner at Ser-554 and Ser-558 in the suprachiasmatic nucleus (SCN) and liver. Phosphorylation at Ser-558 by DYRK1A promotes subsequent phosphorylation at Ser-554 by GSK3-beta: the two-step phosphorylation at the neighboring Ser residues leads to its proteasomal degradation. Post-translationally, ubiquitinated by the SCF(FBXL3) and SCF(FBXL21) complexes, regulating the balance between degradation and stabilization. The SCF(FBXL3) complex is mainly nuclear and mediates ubiquitination and subsequent degradation of CRY2. In contrast, cytoplasmic SCF(FBXL21) complex-mediated ubiquitination leads to stabilize CRY2 and counteract the activity of the SCF(FBXL3) complex. The SCF(FBXL3) and SCF(FBXL21) complexes probably mediate ubiquitination at different Lys residues. The SCF(FBXL3) complex recognizes and binds CRY2 phosphorylated at Ser-554 and Ser-558. Ubiquitination may be inhibited by PER2. Deubiquitinated by USP7. As to expression, expressed in all tissues examined including fetal brain, fibroblasts, heart, brain, placenta, lung, liver, skeletal muscle, kidney, pancreas, spleen, thymus, prostate, testis, ovary, small intestine, colon and leukocytes. Highest levels in heart and skeletal muscle.

It is found in the cytoplasm. It localises to the nucleus. Its activity is regulated as follows. KL001 (N-[3-(9H-carbazol-9-yl)-2-hydroxypropyl]-N-(2-furanylmethyl)-methanesulfonamide) binds to CRY1 and stabilizes it by inhibiting FBXL3- and ubiquitin-dependent degradation of CRY1 resulting in lengthening of the circadian periods. Its function is as follows. Transcriptional repressor which forms a core component of the circadian clock. The circadian clock, an internal time-keeping system, regulates various physiological processes through the generation of approximately 24 hour circadian rhythms in gene expression, which are translated into rhythms in metabolism and behavior. It is derived from the Latin roots 'circa' (about) and 'diem' (day) and acts as an important regulator of a wide array of physiological functions including metabolism, sleep, body temperature, blood pressure, endocrine, immune, cardiovascular, and renal function. Consists of two major components: the central clock, residing in the suprachiasmatic nucleus (SCN) of the brain, and the peripheral clocks that are present in nearly every tissue and organ system. Both the central and peripheral clocks can be reset by environmental cues, also known as Zeitgebers (German for 'timegivers'). The predominant Zeitgeber for the central clock is light, which is sensed by retina and signals directly to the SCN. The central clock entrains the peripheral clocks through neuronal and hormonal signals, body temperature and feeding-related cues, aligning all clocks with the external light/dark cycle. Circadian rhythms allow an organism to achieve temporal homeostasis with its environment at the molecular level by regulating gene expression to create a peak of protein expression once every 24 hours to control when a particular physiological process is most active with respect to the solar day. Transcription and translation of core clock components (CLOCK, NPAS2, BMAL1, BMAL2, PER1, PER2, PER3, CRY1 and CRY2) plays a critical role in rhythm generation, whereas delays imposed by post-translational modifications (PTMs) are important for determining the period (tau) of the rhythms (tau refers to the period of a rhythm and is the length, in time, of one complete cycle). A diurnal rhythm is synchronized with the day/night cycle, while the ultradian and infradian rhythms have a period shorter and longer than 24 hours, respectively. Disruptions in the circadian rhythms contribute to the pathology of cardiovascular diseases, cancer, metabolic syndromes and aging. A transcription/translation feedback loop (TTFL) forms the core of the molecular circadian clock mechanism. Transcription factors, CLOCK or NPAS2 and BMAL1 or BMAL2, form the positive limb of the feedback loop, act in the form of a heterodimer and activate the transcription of core clock genes and clock-controlled genes (involved in key metabolic processes), harboring E-box elements (5'-CACGTG-3') within their promoters. The core clock genes: PER1/2/3 and CRY1/2 which are transcriptional repressors form the negative limb of the feedback loop and interact with the CLOCK|NPAS2-BMAL1|BMAL2 heterodimer inhibiting its activity and thereby negatively regulating their own expression. This heterodimer also activates nuclear receptors NR1D1/2 and RORA/B/G, which form a second feedback loop and which activate and repress BMAL1 transcription, respectively. CRY1 and CRY2 have redundant functions but also differential and selective contributions at least in defining the pace of the SCN circadian clock and its circadian transcriptional outputs. Less potent transcriptional repressor in cerebellum and liver than CRY1, though less effective in lengthening the period of the SCN oscillator. Seems to play a critical role in tuning SCN circadian period by opposing the action of CRY1. With CRY1, dispensable for circadian rhythm generation but necessary for the development of intercellular networks for rhythm synchrony. May mediate circadian regulation of cAMP signaling and gluconeogenesis by blocking glucagon-mediated increases in intracellular cAMP concentrations and in CREB1 phosphorylation. Besides its role in the maintenance of the circadian clock, is also involved in the regulation of other processes. Plays a key role in glucose and lipid metabolism modulation, in part, through the transcriptional regulation of genes involved in these pathways, such as LEP or ACSL4. Represses glucocorticoid receptor NR3C1/GR-induced transcriptional activity by binding to glucocorticoid response elements (GREs). Represses the CLOCK-BMAL1 induced transcription of BHLHE40/DEC1. Represses the CLOCK-BMAL1 induced transcription of NAMPT. Represses PPARD and its target genes in the skeletal muscle and limits exercise capacity. Represses the transcriptional activity of NR1I2. This is Cryptochrome-2 (CRY2) from Homo sapiens (Human).